We begin with the raw amino-acid sequence, 442 residues long: tRNA-2-methylthio-N(6)-dimethylallyladenosine synthase (442 aa).

The 119-residue stretch at 2-120 folds into the MTTase N-terminal domain; it reads KKVFIRTFGC…LPKMIVDKET (119 aa). Cys11, Cys49, Cys83, Cys157, Cys161, and Cys164 together coordinate [4Fe-4S] cluster. The region spanning 143-375 is the Radical SAM core domain; it reads RVEGGAAFVS…NEVIEAETAR (233 aa). Residues 378–441 form the TRAM domain; that stretch reads QTMIGTVQRC…TFSLRGKIVE (64 aa).

This sequence belongs to the methylthiotransferase family. MiaB subfamily. As to quaternary structure, monomer. The cofactor is [4Fe-4S] cluster.

The protein localises to the cytoplasm. The catalysed reaction is N(6)-dimethylallyladenosine(37) in tRNA + (sulfur carrier)-SH + AH2 + 2 S-adenosyl-L-methionine = 2-methylsulfanyl-N(6)-dimethylallyladenosine(37) in tRNA + (sulfur carrier)-H + 5'-deoxyadenosine + L-methionine + A + S-adenosyl-L-homocysteine + 2 H(+). In terms of biological role, catalyzes the methylthiolation of N6-(dimethylallyl)adenosine (i(6)A), leading to the formation of 2-methylthio-N6-(dimethylallyl)adenosine (ms(2)i(6)A) at position 37 in tRNAs that read codons beginning with uridine. This chain is tRNA-2-methylthio-N(6)-dimethylallyladenosine synthase, found in Neisseria gonorrhoeae (strain ATCC 700825 / FA 1090).